A 44-amino-acid chain; its full sequence is Benzaldehyde dehydrogenase [NAD(+)] II (44 aa).

Belongs to the aldehyde dehydrogenase family.

The enzyme catalyses benzaldehyde + NAD(+) + H2O = benzoate + NADH + 2 H(+). The protein is Benzaldehyde dehydrogenase [NAD(+)] II of Acinetobacter guillouiae (Acinetobacter genomosp. 11).